The following is a 79-amino-acid chain: UPF0180 protein Bcer98_1118 (79 aa).

This sequence belongs to the UPF0180 family.

In Bacillus cytotoxicus (strain DSM 22905 / CIP 110041 / 391-98 / NVH 391-98), this protein is UPF0180 protein Bcer98_1118.